The chain runs to 123 residues: Large ribosomal subunit protein uL24 (123 aa).

This sequence belongs to the universal ribosomal protein uL24 family. As to quaternary structure, part of the 50S ribosomal subunit.

In terms of biological role, one of two assembly initiator proteins, it binds directly to the 5'-end of the 23S rRNA, where it nucleates assembly of the 50S subunit. Functionally, located at the polypeptide exit tunnel on the outside of the subunit. The sequence is that of Large ribosomal subunit protein uL24 from Methanocella arvoryzae (strain DSM 22066 / NBRC 105507 / MRE50).